The primary structure comprises 362 residues: P2Y purinoceptor 1 (362 aa).

The Extracellular segment spans residues 1–40 (MTEALISAALNGTQPELLAGGWAAGNATTKCSLTKTGFQF). Asparagine 11 and asparagine 26 each carry an N-linked (GlcNAc...) asparagine glycan. 2 disulfides stabilise this stretch: cysteine 31–cysteine 285 and cysteine 113–cysteine 191. Residue lysine 35 participates in ADP binding. Residues 41–63 (YYLPTVYILVFITGFLGNSVAIW) traverse the membrane as a helical segment. Residues 64 to 76 (MFVFHMRPWSGIS) lie on the Cytoplasmic side of the membrane. A helical membrane pass occupies residues 77-98 (VYMFNLALADFLYVLTLPALIF). The Extracellular segment spans residues 99–114 (YYFNKTDWIFGDVMCK). An N-linked (GlcNAc...) asparagine glycan is attached at asparagine 102. The helical transmembrane segment at 115-136 (LQRFIFHVNLYGSILFLTCISV) threads the bilayer. Residues 137–155 (HRYTGVVHPLKSLGRLKKK) lie on the Cytoplasmic side of the membrane. A helical transmembrane segment spans residues 156-177 (NAVYVSSLVWALVVAVIAPILF). Residues 178–203 (YSGTGVRRNKTITCYDTTADEYLRSY) are Extracellular-facing. Residue asparagine 186 is glycosylated (N-linked (GlcNAc...) asparagine). 192 to 194 (YDT) serves as a coordination point for ADP. A helical transmembrane segment spans residues 204–226 (FVYSMCTTVFMFCIPFIVILGCY). The Cytoplasmic segment spans residues 227 to 249 (GLIVKALIYKDLDNSPLRRKSIY). A helical membrane pass occupies residues 250–273 (LVIIVLTVFAVSYLPFHVMKTLNL). Residues 272–276 (NLRAR), 292–295 (YATY), and arginine 299 contribute to the ADP site. Residues 274–292 (RARLDFQTPQMCAFNDKVY) lie on the Extracellular side of the membrane. Residues 293-314 (ATYQVTRGLASLNSCVDPILYF) form a helical membrane-spanning segment. Residues 315 to 362 (LAGDTFRRRLSRATRKSSRRSEPNVQSKSEEMTLNILTEYKQNGDTSL) lie on the Cytoplasmic side of the membrane.

It belongs to the G-protein coupled receptor 1 family. Brain, spinal cord, gastrointestinal tract, spleen and leg muscle. Is not detected in the heart, liver, stomach, lung and kidney.

It localises to the cell membrane. Its function is as follows. Receptor for extracellular adenine nucleotides such as ADP. In platelets, binding to ADP leads to mobilization of intracellular calcium ions via activation of phospholipase C, a change in platelet shape, and ultimately platelet aggregation. The sequence is that of P2Y purinoceptor 1 (P2RY1) from Gallus gallus (Chicken).